Here is a 202-residue protein sequence, read N- to C-terminus: Matrix protein (202 aa).

Residues 9-31 (KNRRDEDTQKSSPASAPLDDDDL) form a disordered region. Residues 35-38 (PPEY) carry the PPXY motif motif. The essential for glycoprotein binding stretch occupies residues 115–151 (KLRRTFIFQWADSRGPLEGEELEYSQEITWDDDTEFV).

Belongs to the lyssavirus matrix protein family. Homomultimer. Interacts with nucleoprotein and with the cytoplasmic domain of glycoprotein. Interacts with host ATP6V1A; this interaction plays an important role in virion uncoating after viral entry.

It localises to the virion membrane. It is found in the host endomembrane system. The protein localises to the host cytoplasm. In terms of biological role, plays a major role in assembly, budding and uncoating of virion after membrane fusion. Completely covers the ribonucleoprotein coil and keep it in condensed bullet-shaped form. Inhibits viral transcription and stimulates replication. Plays a major role in early induction of TRAIL-mediated apoptosis in infected neurons. Inhibits the integrated stress response (ISR) in the infected cell by blocking the formation of stress granules. The chain is Matrix protein (M) from Rabies virus (strain SAD B19) (RABV).